A 138-amino-acid polypeptide reads, in one-letter code: Basic phospholipase A2 ammodytoxin B (138 aa).

An N-terminal signal peptide occupies residues 1–16; sequence MRTLWIVAVCLIGVEG. 7 cysteine pairs are disulfide-bonded: C42–C131, C44–C60, C59–C111, C65–C138, C66–C104, C73–C97, and C91–C102. Ca(2+)-binding residues include Y43, G45, and G47. The active site involves H63. D64 contributes to the Ca(2+) binding site. Residue D105 is part of the active site.

Belongs to the phospholipase A2 family. Group II subfamily. D49 sub-subfamily. In terms of assembly, monomer. Binds to calmodulin, coagulation factor X (F10), M-type PLA2 receptor (R-180), 14-3-3 proteins gamma (YWHAG) and epsilon (YWHAE), and R25, a mitochondrial membrane protein. Ca(2+) serves as cofactor. In terms of tissue distribution, expressed by the venom gland.

The protein localises to the secreted. It localises to the host cytoplasm. Its subcellular location is the host cytosol. It carries out the reaction a 1,2-diacyl-sn-glycero-3-phosphocholine + H2O = a 1-acyl-sn-glycero-3-phosphocholine + a fatty acid + H(+). Functionally, snake venom phospholipase A2 (PLA2) that acts as a presynaptic neurotoxin, an inhibitor of blood coagulation, and has been found to bind with high affinity to intracellular proteins. The response of indirectly stimulated neuromuscular preparations to ammodytoxin (Atx) is triphasic. The first phase, the transient inhibition of the acetylcholine (ACh) release, starts soon after the addition of Atx and lasts for several minutes. This phase is probably independent of Atx enzymatic activity. The effect may be due to the specific binding of the toxin to presynaptic receptors. These receptors, called N-type receptors, are still unidentified. It is noteworthy that a neuronal isoform of the M-type PLA2 receptor (R180) has been identified as a high-affinity receptor for Atx in neuronal plasma membranes. It was demonstrated however that this receptor is not essential for expression of neurotoxicity by Atx. The second phase corresponds to an augmentation of neurotransmitter release. A peak is reached 10-20 minutes after exposure of the preparation to Atx and is followed by a gradual reduction. In this phase, the enzymatic activity of Atx of the mammalian is not significant. It is speculated that the increased release of neurotransmitter in this phase is induced by the interference of Atx with voltage-gated potassium channels. Measurements of ionic currents showed however that voltage-gated potassium channels are not affected by Atx. The third phase of the response of neuromuscular preparations to Atx, which corresponds to a complete and irreversible paralysis, is clearly dependent on the hydrolytic activity of the toxin. In addition to its presynaptic neurotoxicity, Atx shows an anticoagulant activity by binding with high affinity to activated coagulation factor X (F10) thus inhibiting the formation of the prothrombinase complex (FX/FV) and its activity (IC(50) is 82 nM). Surprisingly, Atx was discovered to bind intracellular proteins such as calmodulin (CaM), 14-3-3 proteins gamma (YWHAG) and epsilon (YWHAE) (by similarity with AtxC), as well as R25 (by similarity with AtxC), a mitochondrial integral membrane protein found in cerebral cortex. These findings raised a doubt about the dogma of the exclusively extracellular action of PLA2s, defended by the potential instability of these molecules in the reducing environment of the eukaryotic cytosol coupled with their possible inability to act as enzymes in this cellular compartment, due to too low concentration of calcium ions. This hypothesis was challenged efficiently by demonstrating the internalization of AtxA into a culture cells, but still remains to be directly demonstrated in vivo. PLA2 catalyzes the calcium-dependent hydrolysis of the 2-acyl groups in 3-sn-phosphoglycerides. The sequence is that of Basic phospholipase A2 ammodytoxin B from Vipera ammodytes ammodytes (Western sand viper).